The chain runs to 74 residues: DNA-directed RNA polymerase subunit omega (74 aa).

Belongs to the RNA polymerase subunit omega family. The RNAP catalytic core consists of 2 alpha, 1 beta, 1 beta' and 1 omega subunit. When a sigma factor is associated with the core the holoenzyme is formed, which can initiate transcription.

It carries out the reaction RNA(n) + a ribonucleoside 5'-triphosphate = RNA(n+1) + diphosphate. Its function is as follows. Promotes RNA polymerase assembly. Latches the N- and C-terminal regions of the beta' subunit thereby facilitating its interaction with the beta and alpha subunits. The sequence is that of DNA-directed RNA polymerase subunit omega from Helicobacter pylori (strain Shi470).